The sequence spans 293 residues: Autophagy-related protein 36 (293 aa).

Polar residues-rich tracts occupy residues 98-108 (ISSDSNKNSPP) and 260-273 (GETL…ASSS). 2 disordered regions span residues 98 to 121 (ISSD…NIRS) and 250 to 273 (SRSR…ASSS).

Interacts with PEX3, ATG8 and ATG11.

The protein resides in the peroxisome. Required for autophagic breakdown of peroxisomes, called pexophagy, through linking peroxisomes to the autophagy apparatus. Involved in regulation of the glyoxylate cycle. This chain is Autophagy-related protein 36 (ATG36), found in Saccharomyces cerevisiae (strain ATCC 204508 / S288c) (Baker's yeast).